A 187-amino-acid chain; its full sequence is MSSDTGDRTWGHLAATEHYGRITDTTDYIQVDKENLKNDPYYNSSQASHCMIFARNNKKTFGVYNPRAAILMQMRFDGNLGFPGGLVDAGEDSIKALNRELTEEMNLDTSKHSVSESSYVVTHWSISKRLCLHFYALEVSLAELYEIEKRALLAKDYGSEVLGTIRMPLYTMGDGYRGFPTFLTTPS.

Residues 43-187 (NSSQASHCMI…GFPTFLTTPS (145 aa)) form the Nudix hydrolase domain. F82 contacts substrate. Mn(2+)-binding residues include G84, E100, E104, and E160. The Nudix box motif lies at 85–106 (GLVDAGEDSIKALNRELTEEMN).

This sequence belongs to the Nudix hydrolase family. NUDT16 subfamily. Homodimer. Requires Mg(2+) as cofactor. It depends on Mn(2+) as a cofactor. The cofactor is Co(2+).

The protein localises to the nucleus. Its subcellular location is the nucleolus. It is found in the nucleoplasm. It localises to the cytoplasm. It carries out the reaction a 5'-end (N(7)-methyl 5'-triphosphoguanosine)-ribonucleoside in mRNA + H2O = N(7)-methyl-GDP + a 5'-end phospho-ribonucleoside in mRNA + 2 H(+). The catalysed reaction is IDP + H2O = IMP + phosphate + H(+). The enzyme catalyses dIDP + H2O = dIMP + phosphate + H(+). Its function is as follows. RNA-binding and decapping enzyme that catalyzes the cleavage of the cap structure of snoRNAs in a metal-dependent manner. Has diphosphatase activity and removes m7G caps from U8 snoRNA. May catalyze the cleavage of the cap structure on mRNAs. May also act as a phosphatase; hydrolyzes the non-canonical purine nucleotides inosine diphosphate (IDP) and deoxyinosine diphosphate (dITP). May bind to the U8 snoRNA. The polypeptide is U8 snoRNA-decapping enzyme (NUDT16) (Homalodisca vitripennis (Glassy-winged sharpshooter)).